A 414-amino-acid polypeptide reads, in one-letter code: Putative competence-damage inducible protein (414 aa).

This sequence belongs to the CinA family.

The polypeptide is Putative competence-damage inducible protein (Listeria monocytogenes serotype 4a (strain HCC23)).